Reading from the N-terminus, the 747-residue chain is Probable cyclic nucleotide-gated ion channel 6 (747 aa).

Residues 1–117 (MFDTCGPKGV…DKFLLLCNKL (117 aa)) are Cytoplasmic-facing. A helical membrane pass occupies residues 118-138 (FVASCILAVSVDPLFLYLPFI). Over 139–150 (NDKAKCVGIDRK) the chain is Extracellular. Residues 151 to 171 (LAIIVTTIRTVIDSFYLFHMA) traverse the membrane as a helical segment. The Cytoplasmic portion of the chain corresponds to 172 to 205 (LRFRTAYVAPSSRVFGRGELVIDPAQIAKRYLQQ). A helical transmembrane segment spans residues 206-226 (YFIIDLLSVLPVPQIIVWRFL). At 227 to 239 (YTSRGANVLATKQ) the chain is on the extracellular side. Residues 240–260 (ALRYIVLVQYIPRFLRMYPLS) form a helical membrane-spanning segment. Topologically, residues 261 to 280 (SELKRTAGVFAETAWAGAAY) are cytoplasmic. A helical membrane pass occupies residues 281 to 301 (YLLLYMLASHIVGALWYLLAL). The Extracellular portion of the chain corresponds to 302 to 407 (ERNNDCWSKA…GQGLETSTYP (106 aa)). The chain crosses the membrane as a helical span at residues 408 to 428 (GEVIFSITLAIAGLLLFALLI). The Cytoplasmic portion of the chain corresponds to 429 to 747 (GNMQTYLQSL…PEPDFSAEDH (319 aa)). Residues 514 to 638 (LFEN…SRQV) and D585 contribute to the a nucleoside 3',5'-cyclic phosphate site. A calmodulin-binding region spans residues 630 to 645 (FRRLHSRQVQHTFRFY). An IQ domain is found at 650 to 679 (RTWAACFMQAAWRRYIKRKKLEQLRKEEEE).

Belongs to the cyclic nucleotide-gated cation channel (TC 1.A.1.5) family. Homotetramer or heterotetramer.

It localises to the cell membrane. Probable cyclic nucleotide-gated ion channel. The sequence is that of Probable cyclic nucleotide-gated ion channel 6 (CNGC6) from Arabidopsis thaliana (Mouse-ear cress).